A 90-amino-acid polypeptide reads, in one-letter code: Small ribosomal subunit protein uS15 (90 aa).

Belongs to the universal ribosomal protein uS15 family. In terms of assembly, part of the 30S ribosomal subunit. Forms a bridge to the 50S subunit in the 70S ribosome, contacting the 23S rRNA.

One of the primary rRNA binding proteins, it binds directly to 16S rRNA where it helps nucleate assembly of the platform of the 30S subunit by binding and bridging several RNA helices of the 16S rRNA. Its function is as follows. Forms an intersubunit bridge (bridge B4) with the 23S rRNA of the 50S subunit in the ribosome. The chain is Small ribosomal subunit protein uS15 from Wolinella succinogenes (strain ATCC 29543 / DSM 1740 / CCUG 13145 / JCM 31913 / LMG 7466 / NCTC 11488 / FDC 602W) (Vibrio succinogenes).